A 670-amino-acid polypeptide reads, in one-letter code: Solute carrier organic anion transporter family member 1A6 (670 aa).

At 1–20 (MGEPEKRAGTHGIRCFAKIK) the chain is on the cytoplasmic side. A helical membrane pass occupies residues 21–40 (VFLLALTWAYASKALSATYM). The Extracellular portion of the chain corresponds to 41 to 59 (NSMLTQIERRFNISTSIVG). A glycan (N-linked (GlcNAc...) asparagine) is linked at Asn-52. A helical transmembrane segment spans residues 60-80 (LINGSFEVGNLLLIIFVSYFG). Topologically, residues 81-86 (RKRHRP) are cytoplasmic. Residues 87–111 (IMIGIGCAVMGLGCFIISLPHFLMG) traverse the membrane as a helical segment. The Extracellular portion of the chain corresponds to 112–155 (RYEYETTISPTSNLSSNSFLCMENRTQTLKPTQDPAECVKEMKS). Asn-124 and Asn-135 each carry an N-linked (GlcNAc...) asparagine glycan. The helical transmembrane segment at 156 to 184 (LMWIYVLVGNIIRGIGETPIMPLGISYIE) threads the bilayer. The Cytoplasmic portion of the chain corresponds to 185-203 (DFAKSENSPFYIGILEVGK). Residues 204–224 (ITGPIAAIWLGSFCATIYVDM) traverse the membrane as a helical segment. At 225–242 (GSVNTDDLTITPTDTRCV) the chain is on the extracellular side. A helical transmembrane segment spans residues 243-267 (GAWWIGFLVCAGLNILISIPFFFFP). At 268-311 (KTFPKEGPEDMANETKNDEGDKHREKAKEEKRGITKDFFLFMKS) the chain is on the cytoplasmic side. Residues 276-295 (EDMANETKNDEGDKHREKAK) are disordered. A helical membrane pass occupies residues 312 to 333 (LSCNPIYMLCVLTSVLQVNGFV). Topologically, residues 334 to 353 (SIFTFKPKYLEHHYGKSSSE) are extracellular. Residues 354–377 (AIFLMGLYTLPSVCVGYLISGFIM) traverse the membrane as a helical segment. At 378–381 (KKFK) the chain is on the cytoplasmic side. The helical transmembrane segment at 382–405 (ITLKKAAFISYCLGMSECLLSLCN) threads the bilayer. Over 406–513 (FMLTCDNVPI…PDCANKLQYF (108 aa)) the chain is Extracellular. In terms of domain architecture, Kazal-like spans 433–488 (NTVLADCNTRCSCLTKTWDPVCGDNGLAYITPCLAGCEKSVGSGINMVLQDCSCIQ). Cystine bridges form between Cys-439-Cys-469, Cys-445-Cys-465, and Cys-454-Cys-486. Residue Asn-492 is glycosylated (N-linked (GlcNAc...) asparagine). Residues 514 to 536 (LIITVFCSFFYSLSLIPGYMIFL) traverse the membrane as a helical segment. The Cytoplasmic portion of the chain corresponds to 537 to 545 (RCMKSEEKS). The chain crosses the membrane as a helical span at residues 546–571 (LGIGLQAFCMRILGGILAPIYFGVLI). At 572 to 605 (DRTCLHWGTQKCGEPGACRTYEINSFRSIYLGLP) the chain is on the extracellular side. Residues 606 to 623 (AALRGSSYLPAFFILRLM) form a helical membrane-spanning segment. Topologically, residues 624–670 (RKFQFPGDINSPVTDHVEMMLTEKESEHTDVHRSPQVENDGELKTKL) are cytoplasmic. Ser-634 bears the Phosphoserine mark. The disordered stretch occupies residues 647 to 670 (KESEHTDVHRSPQVENDGELKTKL).

It belongs to the organo anion transporter (TC 2.A.60) family.

It is found in the cell membrane. Functionally, may mediate the Na(+)-independent transport of organic anions. The chain is Solute carrier organic anion transporter family member 1A6 (Slco1a6) from Rattus norvegicus (Rat).